The primary structure comprises 340 residues: MKQVVIHDPTLRDGQHAVHHRLGLTELRRYAEAADAARVPVVEVGHGNGLGASSLQVGLAAATDDAMLSTVREALRHSRLGTFMLPGWGTSDDLRRAISHGVDVFRVGVHATEASLAEHHLGFLRDAGAEAHCVLMMSHMASPGELAEQAARAVGYGAQAVGIMDSAGHFLPPDVTARIGAIVEAVGTVPVIFHGHNNLGMAVANSVAAAEAGARIIDGCARGFGAGAGNTQLEVLVPVLERSGFATGIDLYALLDAADLAERELMPAPPVPASMSIVSGLAGVFSGFKHRVVELAGAAGVDPREVFFELGRRQAIAGQEDLIVDVVAELSGRGPKTDAA.

In terms of domain architecture, Pyruvate carboxyltransferase spans 4–255; that stretch reads VVIHDPTLRD…ATGIDLYALL (252 aa). 12–13 provides a ligand contact to substrate; it reads RD. Position 13 (D13) interacts with Mn(2+). Residue H16 is the Proton acceptor of the active site. Substrate contacts are provided by S166 and H194. Residues H194 and H196 each contribute to the Mn(2+) site.

The protein belongs to the 4-hydroxy-2-oxovalerate aldolase family.

It carries out the reaction (S)-4-hydroxy-2-oxopentanoate = acetaldehyde + pyruvate. This chain is 4-hydroxy-2-oxovalerate aldolase, found in Streptomyces griseus subsp. griseus (strain JCM 4626 / CBS 651.72 / NBRC 13350 / KCC S-0626 / ISP 5235).